The chain runs to 161 residues: MDDEEVAESWEEAADSGEMERRLEEKLRISQKERLSSGSSSRSPMRTAIVIQDDSLPAAPPPQIRILKRPSSNGSLGSSALQTRPSPQVKSLAQREAEYAEARKRILGSATPDDTPQERPNSDRSPRGSSHTLSEENRPGNHVVRQPAGPDGTQGFHHQRR.

The span at 1 to 17 (MDDEEVAESWEEAADSG) shows a compositional bias: acidic residues. The disordered stretch occupies residues 1-161 (MDDEEVAESW…GTQGFHHQRR (161 aa)). The segment covering 18 to 35 (EMERRLEEKLRISQKERL) has biased composition (basic and acidic residues). The 70-residue stretch at 42–111 (RSPMRTAIVI…ARKRILGSAT (70 aa)) folds into the SUZ domain. Residues 70 to 91 (PSSNGSLGSSALQTRPSPQVKS) are compositionally biased toward polar residues. 2 stretches are compositionally biased toward basic and acidic residues: residues 93-104 (AQREAEYAEARK) and 116-126 (PQERPNSDRSP). The region spanning 116–160 (PQERPNSDRSPRGSSHTLSEENRPGNHVVRQPAGPDGTQGFHHQR) is the SUZ-C domain. A Phosphoserine modification is found at S125.

This sequence belongs to the SZRD1 family.

The sequence is that of SUZ RNA-binding domain-containing (szrd1) from Danio rerio (Zebrafish).